The sequence spans 414 residues: Carboxynorspermidine synthase (414 aa).

It belongs to the saccharopine dehydrogenase family. Carboxynorspermidine synthase subfamily.

The catalysed reaction is carboxynorspermidine + NADP(+) + H2O = L-aspartate 4-semialdehyde + propane-1,3-diamine + NADPH + H(+). It carries out the reaction carboxyspermidine + NADP(+) + H2O = L-aspartate 4-semialdehyde + putrescine + NADPH + H(+). Its function is as follows. Involved in norspermidine biosynthesis. Catalyzes the synthesis of carboxynorspermidine from L-aspartate 4-semialdehyde and 1,3-diaminopropane. Is also active with putrescine as a substrate. Essential for biofilm formation. This Vibrio cholerae serotype O1 (strain ATCC 39315 / El Tor Inaba N16961) protein is Carboxynorspermidine synthase.